Reading from the N-terminus, the 54-residue chain is Rubredoxin-1 (54 aa).

The Rubredoxin-like domain occupies 1 to 52 (MKKWECVVCGFIYDEAEGLPDEGIEPGTAWNNVPEDWVCPDCGVGKDDFEMV). The Fe cation site is built by Cys6, Cys9, Cys39, and Cys42.

The protein belongs to the rubredoxin family. Fe(3+) is required as a cofactor.

The protein resides in the cytoplasm. It functions in the pathway hydrocarbon metabolism; alkane degradation. In terms of biological role, involved in the hydrocarbon hydroxylating system, which transfers electrons from NADH to rubredoxin reductase and then through rubredoxin to alkane 1 monooxygenase. In Alcanivorax borkumensis (strain ATCC 700651 / DSM 11573 / NCIMB 13689 / SK2), this protein is Rubredoxin-1 (rubA).